The primary structure comprises 302 residues: Protein transport protein SEC13 homolog A (302 aa).

WD repeat units lie at residues 9-48, 54-95, 101-142, 148-201, 208-251, and 257-296; these read GHSD…GSQH, GHRG…QWTQ, DHKV…GWDT, AHPV…WKMD, KHTD…EQWE, and DFKT…EWEQ.

This sequence belongs to the WD repeat SEC13 family. Interacts with MAG5, SEC31A and SEC31B.

The protein localises to the golgi apparatus. It localises to the endoplasmic reticulum. In terms of biological role, required for protein transport from the endoplasmic reticulum to the Golgi apparatus. The sequence is that of Protein transport protein SEC13 homolog A from Arabidopsis thaliana (Mouse-ear cress).